A 202-amino-acid polypeptide reads, in one-letter code: Large ribosomal subunit protein uL4 (202 aa).

The disordered stretch occupies residues 47-67 (KTKAEVSGGGVKPWKQKGTGR).

The protein belongs to the universal ribosomal protein uL4 family. In terms of assembly, part of the 50S ribosomal subunit.

In terms of biological role, one of the primary rRNA binding proteins, this protein initially binds near the 5'-end of the 23S rRNA. It is important during the early stages of 50S assembly. It makes multiple contacts with different domains of the 23S rRNA in the assembled 50S subunit and ribosome. Functionally, forms part of the polypeptide exit tunnel. This chain is Large ribosomal subunit protein uL4, found in Dichelobacter nodosus (strain VCS1703A).